Reading from the N-terminus, the 136-residue chain is Cystatin-2 (136 aa).

The first 24 residues, 1–24 (MALLRGFLVCSLLLLSCICKEALG), serve as a signal peptide directing secretion. A Cystatin domain is found at 29–124 (GGLENASPEE…CTFEVYNIPW (96 aa)). Positions 73-77 (QIVSG) match the Secondary area of contact motif. 2 cysteine pairs are disulfide-bonded: cysteine 91-cysteine 101 and cysteine 115-cysteine 135.

Belongs to the cystatin family. In terms of tissue distribution, expressed by the venom gland.

It localises to the secreted. Its function is as follows. Inhibits various C1 cysteine proteases including cathepsin L, papain and cathepsin B. This protein has no toxic activity and its function in the venom is unknown. It may play a role as housekeeping or regulatory protein. The polypeptide is Cystatin-2 (Crotalus adamanteus (Eastern diamondback rattlesnake)).